A 124-amino-acid chain; its full sequence is UPF0102 protein Noca_3248 (124 aa).

It belongs to the UPF0102 family.

The chain is UPF0102 protein Noca_3248 from Nocardioides sp. (strain ATCC BAA-499 / JS614).